The sequence spans 478 residues: Glutamate--tRNA ligase (478 aa).

Positions 23–33 (PSPTGFIHLGN) match the 'HIGH' region motif. Residues 130–145 (KQKPRYDGTWRPEEGK) are compositionally biased toward basic and acidic residues. The disordered stretch occupies residues 130-153 (KQKPRYDGTWRPEEGKTLPPVPEG). The 'KMSKS' region motif lies at 255–259 (KMSKR). Lys258 provides a ligand contact to ATP.

This sequence belongs to the class-I aminoacyl-tRNA synthetase family. Glutamate--tRNA ligase type 1 subfamily. As to quaternary structure, monomer.

The protein resides in the cytoplasm. It carries out the reaction tRNA(Glu) + L-glutamate + ATP = L-glutamyl-tRNA(Glu) + AMP + diphosphate. In terms of biological role, catalyzes the attachment of glutamate to tRNA(Glu) in a two-step reaction: glutamate is first activated by ATP to form Glu-AMP and then transferred to the acceptor end of tRNA(Glu). In Paracidovorax citrulli (strain AAC00-1) (Acidovorax citrulli), this protein is Glutamate--tRNA ligase.